A 295-amino-acid chain; its full sequence is Ribosomal RNA small subunit methyltransferase A (295 aa).

The S-adenosyl-L-methionine site is built by Asn33, Val35, Gly60, Glu81, Asp111, and Asn129.

Belongs to the class I-like SAM-binding methyltransferase superfamily. rRNA adenine N(6)-methyltransferase family. RsmA subfamily.

The protein localises to the cytoplasm. The catalysed reaction is adenosine(1518)/adenosine(1519) in 16S rRNA + 4 S-adenosyl-L-methionine = N(6)-dimethyladenosine(1518)/N(6)-dimethyladenosine(1519) in 16S rRNA + 4 S-adenosyl-L-homocysteine + 4 H(+). Specifically dimethylates two adjacent adenosines (A1518 and A1519) in the loop of a conserved hairpin near the 3'-end of 16S rRNA in the 30S particle. May play a critical role in biogenesis of 30S subunits. In Streptomyces avermitilis (strain ATCC 31267 / DSM 46492 / JCM 5070 / NBRC 14893 / NCIMB 12804 / NRRL 8165 / MA-4680), this protein is Ribosomal RNA small subunit methyltransferase A.